We begin with the raw amino-acid sequence, 256 residues long: Alcohol dehydrogenase (256 aa).

12–35 (FVAGLGGIGLDTSKELVKRDLKNL) is an NAD(+) binding site. Residue S140 coordinates substrate. Residue Y153 is the Proton acceptor of the active site.

It belongs to the short-chain dehydrogenases/reductases (SDR) family. In terms of assembly, homodimer.

The enzyme catalyses a primary alcohol + NAD(+) = an aldehyde + NADH + H(+). It catalyses the reaction a secondary alcohol + NAD(+) = a ketone + NADH + H(+). The sequence is that of Alcohol dehydrogenase (Adh) from Drosophila mauritiana (Fruit fly).